Reading from the N-terminus, the 58-residue chain is Preprotein translocase subunit SecG (58 aa).

At 1–33 (MARRRKYEGLNPFVAAGLIKFSEEGELEKIKLS) the chain is on the cytoplasmic side. The helical transmembrane segment at 34 to 55 (PKAAIAISLAIIAAILALNLLL) threads the bilayer. Topologically, residues 56-58 (PPP) are extracellular.

The protein belongs to the SEC61-beta family. In terms of assembly, component of the protein translocase complex. Heterotrimer consisting of alpha (SecY), beta (SecG) and gamma (SecE) subunits. Can form oligomers of the heterotrimer.

The protein localises to the cell membrane. Its function is as follows. Involved in protein export. The function of the beta subunit is unknown, but it may be involved in stabilization of the trimeric complex. The polypeptide is Preprotein translocase subunit SecG (Pyrobaculum calidifontis (strain DSM 21063 / JCM 11548 / VA1)).